A 362-amino-acid polypeptide reads, in one-letter code: Very-long-chain (3R)-3-hydroxyacyl-CoA dehydratase 3 (362 aa).

M1 carries the post-translational modification N-acetylmethionine. At 1–149 the chain is on the cytoplasmic side; the sequence is MENQVLTPHV…ETLTNLRKGY (149 aa). A CS domain is found at 5-94; that stretch reads VLTPHVYWAQ…KVSQWWERLT (90 aa). T7 bears the Phosphothreonine mark. Positions 111 to 136 form a coiled coil; that stretch reads LDESDAEMELRAKEEERLNKLRLESE. A phosphoserine mark is found at S114 and S135. A helical transmembrane segment spans residues 150–170; that stretch reads LFMYNLVQFLGFSWIFVNLTV. Residues 171–185 lie on the Lumenal side of the membrane; sequence RFCILGKESFYDTFH. The helical transmembrane segment at 186-207 threads the bilayer; sequence TVADMMYFCQMLAVVETINAAI. Residues 208–217 are Cytoplasmic-facing; sequence GVTTSPVLPS. Residues 218–235 form a helical membrane-spanning segment; sequence LIQLLGRNFILFIIFGTM. At 236–241 the chain is on the lumenal side; the sequence is EEMQNK. The helical transmembrane segment at 242-256 threads the bilayer; that stretch reads AVVFFVFYLWSAIEI. Over 257-279 the chain is Cytoplasmic; that stretch reads FRYSFYMLTCIDMDWKVLTWLRY. Residues 280-298 form a helical membrane-spanning segment; that stretch reads TLWIPLYPLGCLAEAVSVI. Active-site residues include Y286 and E293. The Lumenal portion of the chain corresponds to 299 to 322; it reads QSIPIFNETGRFSFTLPYPVKIKV. Residues 323–343 traverse the membrane as a helical segment; sequence RFSFFLQIYLIMIFLGLYINF. The Cytoplasmic segment spans residues 344–362; the sequence is RHLYKQRRRRYGQKKKKIH.

It belongs to the very long-chain fatty acids dehydratase HACD family. In terms of assembly, may interact with enzymes of the ELO family (including ELOVL1); with those enzymes that mediate condensation, the first of the four steps of the reaction cycle responsible for fatty acids elongation, may be part of a larger fatty acids elongase complex. Interacts with RAC1. Associates with internalized insulin receptor/INSR complexes on Golgi/endosomal membranes; HACD3/PTPLAD1 together with ATIC and PRKAA2/AMPK2 is proposed to be part of a signaling network regulating INSR autophosphorylation and endocytosis. Highly expressed in testis, kidney, brain, liver and weakly in skeletal muscle, spleen and heart. No expression detected in leukocytes.

The protein resides in the endoplasmic reticulum membrane. It catalyses the reaction a very-long-chain (3R)-3-hydroxyacyl-CoA = a very-long-chain (2E)-enoyl-CoA + H2O. It carries out the reaction (3R)-hydroxyhexadecanoyl-CoA = (2E)-hexadecenoyl-CoA + H2O. It functions in the pathway lipid metabolism; fatty acid biosynthesis. Functionally, catalyzes the third of the four reactions of the long-chain fatty acids elongation cycle. This endoplasmic reticulum-bound enzymatic process, allows the addition of two carbons to the chain of long- and very long-chain fatty acids/VLCFAs per cycle. This enzyme catalyzes the dehydration of the 3-hydroxyacyl-CoA intermediate into trans-2,3-enoyl-CoA, within each cycle of fatty acid elongation. Thereby, it participates in the production of VLCFAs of different chain lengths that are involved in multiple biological processes as precursors of membrane lipids and lipid mediators. May be involved in Rac1-signaling pathways leading to the modulation of gene expression. Promotes insulin receptor/INSR autophosphorylation and is involved in INSR internalization. The polypeptide is Very-long-chain (3R)-3-hydroxyacyl-CoA dehydratase 3 (Homo sapiens (Human)).